The primary structure comprises 216 residues: Ras-related protein Rab-11A (216 aa).

Gly-2 bears the N-acetylglycine mark. Ser-20, Gly-21, Val-22, Gly-23, Lys-24, Ser-25, Asn-26, Asn-37, Leu-38, Ser-40, Ser-42, and Thr-43 together coordinate GTP. A Mg(2+)-binding site is contributed by Ser-25. The Switch 1 motif lies at 36 to 47; the sequence is FNLESKSTIGVE. Positions 43 and 66 each coordinate Mg(2+). Residues 67 to 86 carry the Switch 2 motif; that stretch reads TAGQERYRAITSAYYRGAVG. GTP is bound by residues Gly-69, Asn-124, Lys-125, Asp-127, Ala-155, and Leu-156. The interval 183-207 is disordered; the sequence is DRRENDMSPSNNVVPIHVPPTTENK. 2 S-geranylgeranyl cysteine lipidation sites follow: Cys-212 and Cys-213. Position 213 is a cysteine methyl ester (Cys-213). The propeptide at 214 to 216 is removed in mature form; the sequence is QNI.

The protein belongs to the small GTPase superfamily. Rab family. As to quaternary structure, interacts (GTP-bound form) with RAB11FIPs (via their C-termini) including RAB11FIP1, RAB11FIP2, RAB11FIP3, RAB11FIP4 and RAB11FIP5 effectors. Forms a complex with RAB11FIP3 and dynein intermediate chain DYNC1LI1; the interaction between RAB11A1 and RAB11FIP3 is direct; the complex regulates endocytic trafficking. Interacts with EVI5; EVI5 and RAB11FIP3 may be mutually exclusive and compete for binding RAB11A. Interacts with SGSM1, SGSM2, SGSM3 and VIPAS39. Interacts with EXOC6 in a GTP-dependent manner. Interacts with RAB11FIP5. Interacts with STXBP6. Interacts (GDP-bound form) with ZFYVE27. Interacts with BIRC6/bruce. May interact with TBC1D14. Interacts with UNC119; in a cell cycle-dependent manner. GDP-bound and nucleotide-free forms interact with SH3BP5. Interacts (GDP-bound form) with KIF5A in a ZFYVE27-dependent manner. Interacts (GDP-bound form) with RELCH. Found in a complex composed of RELCH, OSBP1 and RAB11A. Interacts with TBC1D12. Interacts with DEF6. Interacts with ATP9A. Forms a heterotetramer with RAB11FIP3; the GTP-bound form is preferred for binding. Forms a complex with Rabin8/RAB3IP and RAB11FIP3, probably a heterohexamer with two of each protein subunit, where Rabin8/RAB3IP and RAB11FIP3 simultaneously bind to RAB11A; the complex promotes preciliary trafficking and cilia growth. Forms a complex containing RAB11A, ASAP1, Rabin8/RAB3IP, RAP11FIP3 and ARF4; the complex promotes preciliary trafficking; the complex binds to RHO in photoreceptor cells and promotes RHO ciliary transport. Interacts (GTP-bound form) with WDR44; the interaction prevents RAB11A-RAB3IP-RAB11FIP3 complex formation. Mg(2+) serves as cofactor.

It localises to the cell membrane. The protein resides in the endosome membrane. It is found in the recycling endosome membrane. The protein localises to the cleavage furrow. Its subcellular location is the cytoplasmic vesicle. It localises to the phagosome. The protein resides in the cytoplasmic vesicle membrane. It is found in the golgi apparatus. The protein localises to the trans-Golgi network. The enzyme catalyses GTP + H2O = GDP + phosphate + H(+). Regulated by guanine nucleotide exchange factors (GEFs) which promote the exchange of bound GDP for free GTP. Regulated by GTPase activating proteins (GAPs) which increase the GTP hydrolysis activity. Inhibited by GDP dissociation inhibitors (GDIs) which prevent Rab-GDP dissociation. Its function is as follows. The small GTPases Rab are key regulators of intracellular membrane trafficking, from the formation of transport vesicles to their fusion with membranes. Rabs cycle between an inactive GDP-bound form and an active GTP-bound form that is able to recruit to membranes different set of downstream effectors directly responsible for vesicle formation, movement, tethering and fusion. The small Rab GTPase RAB11A regulates endocytic recycling. Forms a functional Rab11/RAB11FIP3/dynein complex that regulates the movement of peripheral sorting endosomes (SE) along microtubule tracks toward the microtubule organizing center/centrosome, generating the endosomal recycling compartment (ERC). Acts as a major regulator of membrane delivery during cytokinesis. Together with MYO5B and RAB8A participates in epithelial cell polarization. Together with Rabin8/RAB3IP, RAB8A, the exocyst complex, PARD3, PRKCI, ANXA2, CDC42 and DNMBP promotes transcytosis of PODXL to the apical membrane initiation sites (AMIS), apical surface formation and lumenogenesis. Together with MYO5B participates in CFTR trafficking to the plasma membrane and TF (Transferrin) recycling in nonpolarized cells. Required in a complex with MYO5B and RAB11FIP2 for the transport of NPC1L1 to the plasma membrane. Participates in the sorting and basolateral transport of CDH1 from the Golgi apparatus to the plasma membrane. Regulates the recycling of FCGRT (receptor of Fc region of monomeric IgG) to basolateral membranes. May also play a role in melanosome transport and release from melanocytes. Promotes Rabin8/RAB3IP preciliary vesicular trafficking to mother centriole by forming a ciliary targeting complex containing Rab11, ASAP1, Rabin8/RAB3IP, RAB11FIP3 and ARF4, thereby regulating ciliogenesis initiation. On the contrary, upon LPAR1 receptor signaling pathway activation, interaction with phosphorylated WDR44 prevents Rab11-RAB3IP-RAB11FIP3 complex formation and cilia growth. Participates in the export of a subset of neosynthesized proteins through a Rab8-Rab10-Rab11-endososomal dependent export route via interaction with WDR44. In Bos taurus (Bovine), this protein is Ras-related protein Rab-11A.